The following is a 364-amino-acid chain: Tyrosine-protein phosphatase YVH1 (364 aa).

The region spanning 11–173 is the Tyrosine-protein phosphatase domain; it reads EVTRILGGIY…LHLFEKMGGD (163 aa). C117 functions as the Phosphocysteine intermediate in the catalytic mechanism. Phosphoserine is present on S196.

This sequence belongs to the protein-tyrosine phosphatase family. Non-receptor class dual specificity subfamily.

The catalysed reaction is O-phospho-L-tyrosyl-[protein] + H2O = L-tyrosyl-[protein] + phosphate. May be directly involved in signal transduction and/or cell cycle regulation. It is necessary for maintaining growth rate or spore germination. Could show both activity toward tyrosine-protein phosphate as well as with serine-protein phosphate. In Saccharomyces cerevisiae (strain ATCC 204508 / S288c) (Baker's yeast), this protein is Tyrosine-protein phosphatase YVH1 (YVH1).